Reading from the N-terminus, the 460-residue chain is GTPase Der (460 aa).

EngA-type G domains follow at residues 9–171 (KTIA…SLNQ) and 199–370 (IQVG…ECFS). Residues 15 to 22 (GQPNVGKS), 62 to 66 (DTGGM), 123 to 126 (NKID), 205 to 212 (GRVNVGKS), 252 to 256 (DTAGI), and 316 to 319 (NKWD) contribute to the GTP site. A KH-like domain is found at 371-455 (RRIPTSLLNS…PLILNAKDKK (85 aa)).

The protein belongs to the TRAFAC class TrmE-Era-EngA-EngB-Septin-like GTPase superfamily. EngA (Der) GTPase family. As to quaternary structure, associates with the 50S ribosomal subunit.

Functionally, GTPase that plays an essential role in the late steps of ribosome biogenesis. The protein is GTPase Der of Helicobacter pylori (strain G27).